The sequence spans 527 residues: Phosphoenolpyruvate carboxykinase (ATP) (527 aa).

Substrate is bound by residues Arg54, Tyr190, and Lys196. Residues Lys196, His215, and 231-239 contribute to the ATP site; that span reads GLSGTGKTT. Residues Lys196 and His215 each contribute to the Mn(2+) site. Residue Asp252 coordinates Mn(2+). ATP-binding positions include Glu280, Arg317, 436–437, and Thr442; that span reads RI. Substrate is bound at residue Arg317.

The protein belongs to the phosphoenolpyruvate carboxykinase (ATP) family. The cofactor is Mn(2+).

The protein resides in the cytoplasm. The enzyme catalyses oxaloacetate + ATP = phosphoenolpyruvate + ADP + CO2. It functions in the pathway carbohydrate biosynthesis; gluconeogenesis. Involved in the gluconeogenesis. Catalyzes the conversion of oxaloacetate (OAA) to phosphoenolpyruvate (PEP) through direct phosphoryl transfer between the nucleoside triphosphate and OAA. This Oceanobacillus iheyensis (strain DSM 14371 / CIP 107618 / JCM 11309 / KCTC 3954 / HTE831) protein is Phosphoenolpyruvate carboxykinase (ATP).